Consider the following 104-residue polypeptide: L-rhamnose mutarotase (104 aa).

Y18 lines the substrate pocket. Catalysis depends on H22, which acts as the Proton donor. Substrate-binding positions include Y41 and 76–77 (WW).

It belongs to the rhamnose mutarotase family. In terms of assembly, homodimer.

It is found in the cytoplasm. The enzyme catalyses alpha-L-rhamnose = beta-L-rhamnose. Its pathway is carbohydrate metabolism; L-rhamnose metabolism. Functionally, involved in the anomeric conversion of L-rhamnose. The protein is L-rhamnose mutarotase of Listeria monocytogenes serotype 4b (strain F2365).